The sequence spans 578 residues: CTP synthase (578 aa).

Residues 305–559 (KIALVGKYTN…LGLVAASSGI (255 aa)) enclose the Glutamine amidotransferase type-1 domain. Catalysis depends on for GATase activity residues C404, H535, and E537.

Belongs to the CTP synthase family.

It catalyses the reaction UTP + L-glutamine + ATP + H2O = CTP + L-glutamate + ADP + phosphate + 2 H(+). Its pathway is pyrimidine metabolism; CTP biosynthesis via de novo pathway; CTP from UDP: step 2/2. Its function is as follows. Catalyzes the ATP-dependent amination of UTP to CTP with either L-glutamine or ammonia as the source of nitrogen. This is CTP synthase (URA7) from Candida glabrata (strain ATCC 2001 / BCRC 20586 / JCM 3761 / NBRC 0622 / NRRL Y-65 / CBS 138) (Yeast).